A 524-amino-acid polypeptide reads, in one-letter code: Keratin, type II cytoskeletal 71 (524 aa).

Residues 1–130 (MSRQFTCKSG…DPEIQKVRAQ (130 aa)) are head. A coil 1A region spans residues 131 to 166 (EREQIKALNNKFASFIDKVRFLEQQNQVLQTKWELL). The 314-residue stretch at 131-444 (EREQIKALNN…KLLESEECRM (314 aa)) folds into the IF rod domain. The linker 1 stretch occupies residues 167-185 (QQLDLNNCKNNLEPILEGH). Positions 186 to 277 (ISNMRKQLET…CLFEAEMAQI (92 aa)) are coil 1B. A linker 12 region spans residues 278–301 (QSHISDMSVILSMDNNRNLDLDSI). Residues 302-440 (IDEVRAQYEE…ATYRKLLESE (139 aa)) form a coil 2 region. The segment at 441-524 (ECRMSGEYSS…LSTPSKKGGR (84 aa)) is tail. Positions 493-524 (GGENRSRGSASDYKDTLTKGSSLSTPSKKGGR) are disordered. Residues 494-509 (GENRSRGSASDYKDTL) show a composition bias toward basic and acidic residues. A compositionally biased stretch (polar residues) spans 510–524 (TKGSSLSTPSKKGGR).

It belongs to the intermediate filament family. In terms of assembly, heterodimer of a type I and a type II keratin. Associates with KRT16 and/or KRT17. As to expression, specifically expressed in the inner root sheath (IRS) of the hair follicle. Present in Henle and the Huxley layers of the IRS, while expression in the cuticle is unsure (at protein level).

The protein resides in the cytoplasm. It is found in the cytoskeleton. Functionally, plays a central role in hair formation. Essential component of keratin intermediate filaments in the inner root sheath (IRS) of the hair follicle. In Mus musculus (Mouse), this protein is Keratin, type II cytoskeletal 71 (Krt71).